The primary structure comprises 665 residues: Syntabulin (665 aa).

The segment covering M1–R22 has biased composition (basic and acidic residues). Residues M1–Y271 are disordered. The sufficient for interaction with KIF5B stretch occupies residues G2 to E421. Residues P35 to P52 show a composition bias toward low complexity. S54 is subject to Phosphoserine. A compositionally biased stretch (low complexity) spans F61–S77. Residues C85–G101 are compositionally biased toward polar residues. Residue S111 is modified to Phosphoserine. The span at G141–S162 shows a compositional bias: low complexity. Residues M168 to R180 show a composition bias toward polar residues. A compositionally biased stretch (low complexity) spans S225–S245. Positions L275–K357 form a coiled coil. Positions R314–E421 are sufficient for interaction with STX1A. Residues S400 and S557 each carry the phosphoserine modification. The chain crosses the membrane as a helical span at residues F609–S629.

In terms of assembly, interacts with STX1A and KIF5B.

Its subcellular location is the golgi apparatus membrane. Functionally, part of a kinesin motor-adapter complex that is critical for the anterograde axonal transport of active zone components and contributes to activity-dependent presynaptic assembly during neuronal development. This Mus musculus (Mouse) protein is Syntabulin (Sybu).